We begin with the raw amino-acid sequence, 310 residues long: Probable manganese-dependent inorganic pyrophosphatase (310 aa).

Mn(2+)-binding residues include His9, Asp13, Asp15, Asp75, His97, and Asp149.

Belongs to the PPase class C family. Requires Mn(2+) as cofactor.

Its subcellular location is the cytoplasm. The catalysed reaction is diphosphate + H2O = 2 phosphate + H(+). This Brevibacillus brevis (strain 47 / JCM 6285 / NBRC 100599) protein is Probable manganese-dependent inorganic pyrophosphatase.